Consider the following 440-residue polypeptide: Xylose isomerase (440 aa).

D307 and D309 together coordinate Mg(2+).

This sequence belongs to the xylose isomerase family. In terms of assembly, homotetramer. It depends on Mg(2+) as a cofactor.

The protein resides in the cytoplasm. The enzyme catalyses alpha-D-xylose = alpha-D-xylulofuranose. This Pectobacterium carotovorum subsp. carotovorum (strain PC1) protein is Xylose isomerase.